The following is a 444-amino-acid chain: EMI domain-containing protein 1 (444 aa).

The first 22 residues, 1 to 22 (MGGPRAWTLLCLGLLLPGGGAA), serve as a signal peptide directing secretion. Residues 33–106 (RRNWCSYVVT…PGHSGVTCEE (74 aa)) form the EMI domain. 3 cysteine pairs are disulfide-bonded: cysteine 37/cysteine 96, cysteine 62/cysteine 68, and cysteine 95/cysteine 104. An O-linked (Fuc) threonine glycan is attached at threonine 42. Residue asparagine 51 is glycosylated (N-linked (GlcNAc...) asparagine). The N-linked (GlcNAc...) asparagine glycan is linked to asparagine 136. Disordered stretches follow at residues 161 to 374 (EQTV…KSHW) and 404 to 444 (PDLG…SERS). In terms of domain architecture, Collagen-like spans 221-371 (GPPGPQGPPG…PGPKGDPGEK (151 aa)). Over residues 222–231 (PPGPQGPPGR) the composition is skewed to pro residues. Low complexity predominate over residues 232–243 (PGQTGAAGTPGK). 2 stretches are compositionally biased toward pro residues: residues 244-264 (MGPP…PVGP) and 292-311 (PTGP…PGLP).

Homo- or heteromers. In terms of processing, O-fucosylated at Thr-42 within the EMI domain by FUT10/POFUT3 and FUT11/POFUT4.

Its subcellular location is the secreted. It is found in the extracellular space. The protein resides in the extracellular matrix. In Mus musculus (Mouse), this protein is EMI domain-containing protein 1 (Emid1).